A 125-amino-acid polypeptide reads, in one-letter code: Late genes activator p4 (125 aa).

Positions 77-96 (RGFHAWLKGDNATWREVHVY) form a DNA-binding region, H-T-H motif.

It belongs to the phi29likevirus late genes activator p4 family. In terms of assembly, interacts with host RNA polymerase (via C-terminus). Interacts with DNA; binds to the A2b, A2c and A3 promoters.

Functionally, mediates, together with protein p6, the early to late transcriptional switch by stabilizing the binding of host RNA polymerase (RNAP) to the late A3 promoter. Activates transcription from the late A3 promoter and represses the main early promoters A2b and A2c by modifying the topology of the sequences encompassing early promoters A2c and A2b and late promoter A3 in a hairpin. Binds to a region of the A3 promoter located between nucleotides -50 and -100 relative to the transcription start site, that presents a sequence-directed curvature. Full induction of this curvature is needed for the transcription activation process. The polypeptide is Late genes activator p4 (4) (Bacillus phage PZA (Bacteriophage PZA)).